The primary structure comprises 153 residues: Transcriptional repressor NrdR (153 aa).

A zinc finger lies at 3 to 34 (CPFCGKENTRVIDSRPADDCSSIRRRRQCDEC). The 91-residue stretch at 49–139 (LVVIKKDNNR…VYREFKDVNT (91 aa)) folds into the ATP-cone domain.

This sequence belongs to the NrdR family. Zn(2+) is required as a cofactor.

Functionally, negatively regulates transcription of bacterial ribonucleotide reductase nrd genes and operons by binding to NrdR-boxes. In Lachnoclostridium phytofermentans (strain ATCC 700394 / DSM 18823 / ISDg) (Clostridium phytofermentans), this protein is Transcriptional repressor NrdR.